A 275-amino-acid polypeptide reads, in one-letter code: Elongation factor Ts (275 aa).

The tract at residues 80 to 83 (TDFV) is involved in Mg(2+) ion dislocation from EF-Tu.

It belongs to the EF-Ts family.

It is found in the cytoplasm. In terms of biological role, associates with the EF-Tu.GDP complex and induces the exchange of GDP to GTP. It remains bound to the aminoacyl-tRNA.EF-Tu.GTP complex up to the GTP hydrolysis stage on the ribosome. This chain is Elongation factor Ts, found in Clavibacter michiganensis subsp. michiganensis (strain NCPPB 382).